A 362-amino-acid chain; its full sequence is Heat-inducible transcription repressor HrcA (362 aa).

Belongs to the HrcA family.

In terms of biological role, negative regulator of class I heat shock genes (grpE-dnaK-dnaJ and groELS operons). Prevents heat-shock induction of these operons. The sequence is that of Heat-inducible transcription repressor HrcA from Bradyrhizobium sp. (strain BTAi1 / ATCC BAA-1182).